The primary structure comprises 373 residues: MPSSMSGYIPSYLDKDELCVVCGDKATGYHYRCITCEGCKGFFRRTIQKNLHPSYSCKYEGKCVIDKVTRNQCQECRFKKCIAVGMATDLVLDDSKRLAKRKLIEENREKRRKDELQKTLVQKPEPTPEEWELIQVVTEAHVATNAQGSHWKQKRKFLPEDIGQAPIVNAPEGGKVDLEAFSQFTKIITPAITRVVDFAKKLPMFCELPCEDQIILLKGCCMEIMSLRAAVRYDPESETLTLNGEMAVTRGQLKNGGLGVVSDAIFDLGVSLSSFNLDDTEVALLQAVLLMSSDRPGLSSVERIEKCQEGFLLAFEHYINYRKHNVAHFWPKLLMKVTDLRMIGACHASRFLHMKVECPTELFPPLFLEVFED.

The modulating stretch occupies residues 1-18; the sequence is MPSSMSGYIPSYLDKDEL. Cys-19, Cys-22, Cys-36, Cys-39, Cys-57, Cys-63, Cys-73, and Cys-76 together coordinate Zn(2+). NR C4-type zinc fingers lie at residues 19–39 and 57–81; these read CVVCGDKATGYHYRCITCEGC and CKYEGKCVIDKVTRNQCQECRFKKC. The segment at residues 19–93 is a DNA-binding region (nuclear receptor); sequence CVVCGDKATG…VGMATDLVLD (75 aa). Positions 129-373 constitute an NR LBD domain; the sequence is EEWELIQVVT…PPLFLEVFED (245 aa). Residues Arg-194, Asn-243, and His-347 each contribute to the 3,3',5-triiodo-L-thyronine site. The L-thyroxine site is built by Arg-194, Asn-243, and His-347.

It belongs to the nuclear hormone receptor family. NR1 subfamily.

The protein localises to the nucleus. Its function is as follows. Nuclear hormone receptor that can act as a repressor or activator of transcription. High affinity receptor for thyroid hormones, including triiodothyronine and thyroxine. The polypeptide is Thyroid hormone receptor beta (thrb) (Aquarana catesbeiana (American bullfrog)).